The following is a 719-amino-acid chain: Protein psiI (719 aa).

An N-terminal signal peptide occupies residues 1-19 (MKIIFNLLILFSLVNFINS). Over 20–658 (QSTTQATTLK…ICQTGAIVST (639 aa)) the chain is Extracellular. N62, N105, N118, N151, N315, N379, N454, N488, N500, N538, N592, and N629 each carry an N-linked (GlcNAc...) asparagine glycan. Residues 119–261 (LTLNPSTGTY…YDYCGVCYGD (143 aa)) form the PA14 domain. Residues 659 to 679 (AVVASVVVVGAVVLGAAIFAG) form a helical membrane-spanning segment. Over 680–719 (KKGYDHWKANQGQVFASSNANPLYQQSNNGGENALFEAPQ) the chain is Cytoplasmic.

Belongs to the prespore-cell-inducing factor family.

It is found in the membrane. The protein is Protein psiI (psiI) of Dictyostelium discoideum (Social amoeba).